Here is a 450-residue protein sequence, read N- to C-terminus: Grayanic acid biosynthesis cluster O-methyltransferase (450 aa).

S-adenosyl-L-methionine is bound at residue aspartate 254. The active-site Proton acceptor is the histidine 301.

The protein belongs to the class I-like SAM-binding methyltransferase superfamily. Cation-independent O-methyltransferase family. COMT subfamily.

Its pathway is secondary metabolite biosynthesis. Non-reducing polyketide synthase; part of the gene cluster that mediates the biosynthesis of orcinol depsidone grayanic acid (GRA), the only major secondary metabolite known in C.grayi. The first step consists in the ring and depside synthesis by PKS16 leading to 4-O-demethylsphaerophorin, involving different orcinol-like rings, one with acetyl CoA and the other with octanoyl CoA as the starter. Further depsidone formation by the GRA cluster-specific cytochrome P450 leads to 4-O-demethylgrayanic acid. Finally, the cluster specific O-methyltransferase probably converts the 4-O-demethylgrayanic acid into grayanic acid. This Cladonia grayi (Gray's cup lichen) protein is Grayanic acid biosynthesis cluster O-methyltransferase.